A 249-amino-acid polypeptide reads, in one-letter code: Probable transcriptional regulatory protein CYA_2259 (249 aa).

This sequence belongs to the TACO1 family.

It localises to the cytoplasm. The protein is Probable transcriptional regulatory protein CYA_2259 of Synechococcus sp. (strain JA-3-3Ab) (Cyanobacteria bacterium Yellowstone A-Prime).